Reading from the N-terminus, the 560-residue chain is Alpha-keto-acid decarboxylase (560 aa).

Glu-61 contacts thiamine diphosphate. The segment at 396 to 478 is thiamine pyrophosphate binding; sequence TSFYGMADHR…VVVNNDGYTV (83 aa). Asp-446, Asn-473, and Gly-475 together coordinate Mg(2+).

It belongs to the TPP enzyme family. A metal cation serves as cofactor. Thiamine diphosphate is required as a cofactor.

Functionally, decarboxylates branched-chain and aromatic alpha-keto acids to aldehydes. This chain is Alpha-keto-acid decarboxylase (kdc), found in Mycobacterium bovis (strain ATCC BAA-935 / AF2122/97).